The sequence spans 383 residues: NifS-like protein (383 aa).

Pyridoxal 5'-phosphate-binding positions include 58 to 59 (SE) and 184 to 186 (SIN).

Belongs to the class-V pyridoxal-phosphate-dependent aminotransferase family. NifS/IscS subfamily. Pyridoxal 5'-phosphate is required as a cofactor.

The protein localises to the virion. The sequence is that of NifS-like protein from African swine fever virus (strain Badajoz 1971 Vero-adapted) (Ba71V).